The primary structure comprises 429 residues: Histidine--tRNA ligase (429 aa).

The protein belongs to the class-II aminoacyl-tRNA synthetase family. As to quaternary structure, homodimer.

It localises to the cytoplasm. It carries out the reaction tRNA(His) + L-histidine + ATP = L-histidyl-tRNA(His) + AMP + diphosphate + H(+). This chain is Histidine--tRNA ligase, found in Streptococcus pneumoniae (strain Hungary19A-6).